Reading from the N-terminus, the 196-residue chain is Elongation factor Ts (196 aa).

An involved in Mg(2+) ion dislocation from EF-Tu region spans residues 80 to 83 (TDFV).

It belongs to the EF-Ts family.

The protein resides in the cytoplasm. Functionally, associates with the EF-Tu.GDP complex and induces the exchange of GDP to GTP. It remains bound to the aminoacyl-tRNA.EF-Tu.GTP complex up to the GTP hydrolysis stage on the ribosome. This Thermus thermophilus (strain ATCC BAA-163 / DSM 7039 / HB27) protein is Elongation factor Ts.